We begin with the raw amino-acid sequence, 732 residues long: Copper-transporting ATPase (732 aa).

At 1–88 (MTKAQFYIEG…NPSFLTPNVK (88 aa)) the chain is on the cytoplasmic side. The HMA domain maps to 2–68 (TKAQFYIEGM…QIEKLGYQPR (67 aa)). Cu(+)-binding residues include Cys13 and Cys16. A helical transmembrane segment spans residues 89–109 (LALVLLGTLGVLALSMFAPLL). The Extracellular portion of the chain corresponds to 110–122 (PLPSFLKNPFING). Residues 123 to 142 (IVQLVLSLMVMHMGRNFYVH) form a helical membrane-spanning segment. Residues 143–149 (GFKALWA) lie on the Cytoplasmic side of the membrane. A helical transmembrane segment spans residues 150–170 (RQPNMDSLIALGTSAALLYSL). Topologically, residues 171–187 (VLLFRAYTHAPIEGYYF) are extracellular. A helical membrane pass occupies residues 188–208 (ESVCVILLFVMAGKRVEENSK). The Cytoplasmic segment spans residues 209 to 336 (DKALEAMQSL…KAPIARLADK (128 aa)). Residues 337–359 (VAGVFVPIVIGIASIAFLVWLVL) traverse the membrane as a helical segment. Residues 360-365 (GDFTRA) are Extracellular-facing. Residues 366-383 (LEVFIAILVISCPCALGL) form a helical membrane-spanning segment. The Cytoplasmic segment spans residues 384-663 (ATPMALLVAQ…KLSALTIANI (280 aa)). The active-site 4-aspartylphosphate intermediate is Asp421. Mg(2+) is bound by residues Asp609 and Asp613. Residues 664 to 683 (KQNLFWAFCYNSIAIPLACG) traverse the membrane as a helical segment. Residues 684–694 (VAYKLGIMFNP) lie on the Extracellular side of the membrane. A helical transmembrane segment spans residues 695–713 (MLASLAMSLSSVSVVLNAQ). The Cytoplasmic segment spans residues 714–732 (RLRGAHFKIRGSHENRHSS).

It belongs to the cation transport ATPase (P-type) (TC 3.A.3) family. Type IB subfamily.

It is found in the cell membrane. It catalyses the reaction Cu(+)(in) + ATP + H2O = Cu(+)(out) + ADP + phosphate + H(+). Functionally, probably involved in copper export. The protein is Copper-transporting ATPase (copA) of Helicobacter felis (strain ATCC 49179 / CCUG 28539 / NCTC 12436 / CS1).